A 378-amino-acid chain; its full sequence is Ferrochelatase (378 aa).

2 residues coordinate Fe cation: His-214 and Glu-295.

Belongs to the ferrochelatase family.

The protein resides in the cytoplasm. The enzyme catalyses heme b + 2 H(+) = protoporphyrin IX + Fe(2+). It participates in porphyrin-containing compound metabolism; protoheme biosynthesis; protoheme from protoporphyrin-IX: step 1/1. In terms of biological role, catalyzes the ferrous insertion into protoporphyrin IX. The protein is Ferrochelatase of Hydrogenovibrio crunogenus (strain DSM 25203 / XCL-2) (Thiomicrospira crunogena).